A 70-amino-acid chain; its full sequence is Flexible pilin (70 aa).

The first 24 residues, 1–24 (MPNFFRNGCIALVGSVAAMGAAHA), serve as a signal peptide directing secretion.

Homomer.

Its subcellular location is the fimbrium. In terms of biological role, fimbriae (also called pili) are polar filaments radiating from the surface of the bacterium to a length of 0.5-1.5 micrometers and numbering 100-300 per cell. They enable bacteria to colonize the epithelium of specific host organs. Flexible pili possess hemagglutinating function. The polypeptide is Flexible pilin (aerA) (Aeromonas hydrophila).